Here is a 388-residue protein sequence, read N- to C-terminus: Processive diacylglycerol beta-glucosyltransferase (388 aa).

It belongs to the glycosyltransferase 28 family. UgtP subfamily.

The protein localises to the cell membrane. The catalysed reaction is a 1,2-diacyl-3-O-(beta-D-glucopyranosyl)-sn-glycerol + UDP-alpha-D-glucose = a 1,2-diacyl-3-O-(beta-D-Glc-(1-&gt;6)-beta-D-Glc)-sn-glycerol + UDP + H(+). It carries out the reaction a 1,2-diacyl-3-O-(beta-D-Glc-(1-&gt;6)-beta-D-Glc)-sn-glycerol + UDP-alpha-D-glucose = a 1,2-diacyl-3-O-(beta-D-Glc-(1-&gt;6)-beta-D-Glc-(1-&gt;6)-beta-D-Glc)-sn-glycerol + UDP + H(+). It catalyses the reaction a 1,2-diacyl-sn-glycerol + UDP-alpha-D-glucose = a 1,2-diacyl-3-O-(beta-D-glucopyranosyl)-sn-glycerol + UDP + H(+). It participates in glycolipid metabolism; diglucosyl-diacylglycerol biosynthesis. Its function is as follows. Processive glucosyltransferase involved in the biosynthesis of both the bilayer- and non-bilayer-forming membrane glucolipids. Is able to successively transfer up to three glucosyl residues to diacylglycerol (DAG), thereby catalyzing the formation of beta-monoglucosyl-DAG (3-O-(beta-D-glucopyranosyl)-1,2-diacyl-sn-glycerol), beta-diglucosyl-DAG (3-O-(beta-D-glucopyranosyl-beta-(1-&gt;6)-D-glucopyranosyl)-1,2-diacyl-sn-glycerol) and beta-triglucosyl-DAG (3-O-(beta-D-glucopyranosyl-beta-(1-&gt;6)-D-glucopyranosyl-beta-(1-&gt;6)-D-glucopyranosyl)-1,2-diacyl-sn-glycerol). Beta-diglucosyl-DAG is the predominant glycolipid found in Bacillales and is also used as a membrane anchor for lipoteichoic acid (LTA). This Bacillus mycoides (strain KBAB4) (Bacillus weihenstephanensis) protein is Processive diacylglycerol beta-glucosyltransferase.